The primary structure comprises 172 residues: MGFKNICKQGSQLYLNGIFPERILARKLKNCAKSYPRTALTIEVLVSSVLGALKVILIPCASTYAALTLPLRALFNAIKTKSCQHLASYAMAWLLNILTIAVIIGLVFSLVFIPPPVVFISLGLLMSVTTSVTLFQVHKNLFPPYEPPPSRPHTPPPFADEYVPLISESYFD.

The next 3 helical transmembrane spans lie at 44–68 (VLVS…AALT), 86–110 (LASY…VFSL), and 117–135 (VVFI…VTLF).

Belongs to the chlamydial CPn_0442/CT_006/TC_0274 family.

Its subcellular location is the cell membrane. This is an uncharacterized protein from Chlamydia pneumoniae (Chlamydophila pneumoniae).